The primary structure comprises 720 residues: MASLAGDRWREALKNHDIFNNLQERLHLEPQGTSKRIAKNLTFCLNGDLFIWDSVESVFYTTNLRQLNSDGEPDTSRYQTLLCINPPLFEVCQVLVSPSQYHVALIGQRGATVLELPQRWGKKSEFEGGRIQINCKTIPVAERFFTSSASVTLRQAVWYPSETEEPHLVLLTSDNTIRFYNLKEPQSPARVLSVSQMDDDSSVHTRSRSYAASLGETAVAFDFGPLADSPHLSSLRMKAELVVYPLYILYGNGETFLNYISLSHSVGSLGKPMGPLPMYPAAEDNYGYDACAVLCLPCVPNILVIATESGMLYHCVVLEAEEEEDGGAVERWSRGSETAPSLYVFECVELELTLKLPAGEEEEITESDFTCPIRLHRDPLCQHRYHCTHEAGVHSVGLTWFKKLHKFLESDEEDKDSLQELAAEQRCIVEHILCTRPLANSLPAPVRGFWIVSDLSLGATMICITSTYECLLLPLLSSIRPASPPLLCSHPGAGSDSSPLRGLAEDSFEQHIRNILARSSTNPLMLRSGDKDSSPPPSECLQLLSRATQVFREEYILKLGLAHEEMQRRVKLLSGQKNKQLEDLALCREDRKSLTEAAERLADKYEDAKYRQEAIMNRVKRVLGSLRSQLPVLSDSEKDMRKELQTINDQLRHLDNGIKQVNMKKDYQKKQMNAGASPAHSSLTLNAHQRKCLQGVLKEQGEHIAGMMKQIKDIKNHFSF.

A coiled-coil region spans residues 584–611 (LALCREDRKSLTEAAERLADKYEDAKYR).

In terms of tissue distribution, widely expressed. Higher levels of expression are detected in highly proliferative frontal regions of the embryo, e.g. brain, eye and anterior trunk.

It localises to the nucleus. The protein localises to the nuclear pore complex. Functionally, component of the nuclear pore complex. This Danio rerio (Zebrafish) protein is Nucleoporin 88.